The following is a 475-amino-acid chain: Ribosomal protein uS12 methylthiotransferase RimO (475 aa).

An MTTase N-terminal domain is found at 5-114 (RTVRLIRLGC…IAQRLEDVLA (110 aa)). Cys14, Cys49, Cys78, Cys174, Cys178, and Cys181 together coordinate [4Fe-4S] cluster. Residues 160 to 390 (LDDSPVAPLK…AGIAEEVTAD (231 aa)) enclose the Radical SAM core domain. Positions 393-461 (RARLGETVDV…GVDFLAAPVT (69 aa)) constitute a TRAM domain.

It belongs to the methylthiotransferase family. RimO subfamily. The cofactor is [4Fe-4S] cluster.

The protein resides in the cytoplasm. It catalyses the reaction L-aspartate(89)-[ribosomal protein uS12]-hydrogen + (sulfur carrier)-SH + AH2 + 2 S-adenosyl-L-methionine = 3-methylsulfanyl-L-aspartate(89)-[ribosomal protein uS12]-hydrogen + (sulfur carrier)-H + 5'-deoxyadenosine + L-methionine + A + S-adenosyl-L-homocysteine + 2 H(+). Functionally, catalyzes the methylthiolation of an aspartic acid residue of ribosomal protein uS12. This Acidothermus cellulolyticus (strain ATCC 43068 / DSM 8971 / 11B) protein is Ribosomal protein uS12 methylthiotransferase RimO.